The sequence spans 247 residues: DNA repair protein RecO (247 aa).

It belongs to the RecO family.

Involved in DNA repair and RecF pathway recombination. This Caldanaerobacter subterraneus subsp. tengcongensis (strain DSM 15242 / JCM 11007 / NBRC 100824 / MB4) (Thermoanaerobacter tengcongensis) protein is DNA repair protein RecO.